The following is a 71-amino-acid chain: UPF0337 protein PPA1427 (71 aa).

A disordered region spans residues 20 to 46; that stretch reads EKIGGLTDDSDLKSAGADQKASGKVAQ.

It belongs to the UPF0337 (CsbD) family.

The protein is UPF0337 protein PPA1427 of Cutibacterium acnes (strain DSM 16379 / KPA171202) (Propionibacterium acnes).